Consider the following 264-residue polypeptide: MTGSIWAIVPAAGRGTRFGGPLPKQYLPAGGQPLMAYTLAALAAHPALAGIMVAIAPGDADWPGWTAVQSTPVLTCLGGASRAASVLAGLLALPESVRADDFVLVHDAARPNLALADLDRLLEIGRGDPVGAILAAPVRDTLKRAGDDGGIDGTEPRERLWRALTPQLFRRHQLIRGLTEAAAAGVEVTDEAMAMERMGLRPLLVEGAEDNFKVTTPADLARFEFELVNRGLGARDPESAHPQSSVLASAFSGPGSRVSGPEEI.

Residues 234 to 264 (ARDPESAHPQSSVLASAFSGPGSRVSGPEEI) form a disordered region.

The protein belongs to the IspD/TarI cytidylyltransferase family. IspD subfamily.

It carries out the reaction 2-C-methyl-D-erythritol 4-phosphate + CTP + H(+) = 4-CDP-2-C-methyl-D-erythritol + diphosphate. It participates in isoprenoid biosynthesis; isopentenyl diphosphate biosynthesis via DXP pathway; isopentenyl diphosphate from 1-deoxy-D-xylulose 5-phosphate: step 2/6. Functionally, catalyzes the formation of 4-diphosphocytidyl-2-C-methyl-D-erythritol from CTP and 2-C-methyl-D-erythritol 4-phosphate (MEP). This Xanthomonas euvesicatoria pv. vesicatoria (strain 85-10) (Xanthomonas campestris pv. vesicatoria) protein is 2-C-methyl-D-erythritol 4-phosphate cytidylyltransferase.